A 420-amino-acid polypeptide reads, in one-letter code: UDP-N-acetylmuramoylalanine--D-glutamate ligase (420 aa).

109-115 (GSAGKTT) lines the ATP pocket.

The protein belongs to the MurCDEF family.

The protein localises to the cytoplasm. It carries out the reaction UDP-N-acetyl-alpha-D-muramoyl-L-alanine + D-glutamate + ATP = UDP-N-acetyl-alpha-D-muramoyl-L-alanyl-D-glutamate + ADP + phosphate + H(+). The protein operates within cell wall biogenesis; peptidoglycan biosynthesis. Cell wall formation. Catalyzes the addition of glutamate to the nucleotide precursor UDP-N-acetylmuramoyl-L-alanine (UMA). This is UDP-N-acetylmuramoylalanine--D-glutamate ligase from Chlamydia abortus (strain DSM 27085 / S26/3) (Chlamydophila abortus).